Consider the following 246-residue polypeptide: Protein-lysine N-methyltransferase EFM6 (246 aa).

S-adenosyl-L-methionine contacts are provided by residues tryptophan 51, 87-89, aspartate 115, tryptophan 143, and alanine 169; that span reads GSG.

This sequence belongs to the class I-like SAM-binding methyltransferase superfamily. METTL21 family. EFM6 subfamily.

It localises to the cytoplasm. S-adenosyl-L-methionine-dependent protein-lysine N-methyltransferase that methylates elongation factor 1-alpha (TEF1 and TEF2) at 'Lys-390'. The polypeptide is Protein-lysine N-methyltransferase EFM6 (Saccharomyces cerevisiae (strain ATCC 204508 / S288c) (Baker's yeast)).